Here is a 204-residue protein sequence, read N- to C-terminus: UPF0301 protein Mflv_0850 (204 aa).

Belongs to the UPF0301 (AlgH) family.

This is UPF0301 protein Mflv_0850 from Mycolicibacterium gilvum (strain PYR-GCK) (Mycobacterium gilvum (strain PYR-GCK)).